Here is a 96-residue protein sequence, read N- to C-terminus: Basic blue protein (96 aa).

The 96-residue stretch at 1–96 (AVYVVGGSGG…SGMKIAVNAL (96 aa)) folds into the Phytocyanin domain. Positions 39, 79, 84, and 89 each coordinate Cu cation. Residues Cys-52 and Cys-85 are joined by a disulfide bond.

This is Basic blue protein from Cucumis sativus (Cucumber).